A 98-amino-acid chain; its full sequence is uncharacterized protein (98 aa).

This is an uncharacterized protein from Archaeoglobus fulgidus (strain ATCC 49558 / DSM 4304 / JCM 9628 / NBRC 100126 / VC-16).